Here is a 485-residue protein sequence, read N- to C-terminus: PTS system arbutin-, cellobiose-, and salicin-specific EIIBC component (485 aa).

The region spanning 1 to 88 is the PTS EIIB type-1 domain; sequence MAKNYAALAR…VSLLPGDMQP (88 aa). Catalysis depends on cysteine 28, which acts as the Phosphocysteine intermediate; for EIIB activity. The next 10 membrane-spanning stretches (helical) occupy residues 102–122, 147–167, 177–197, 207–227, 254–274, 285–305, 330–350, 363–383, 389–409, and 433–453; these read IGAG…PAII, LTIL…MVAA, MSLA…ELMA, FALI…ALVM, LIVL…GIWI, IHGY…PLLV, VMPS…AVAW, AAAA…GVAI, LIAS…AGLA, and IVWV…LTLL. Residues 108–470 form the PTS EIIC type-1 domain; sequence DALIGTMSPL…VEEAAAQARK (363 aa).

The protein localises to the cell inner membrane. Its function is as follows. The phosphoenolpyruvate-dependent sugar phosphotransferase system (sugar PTS), a major carbohydrate active -transport system, catalyzes the phosphorylation of incoming sugar substrates concomitantly with their translocation across the cell membrane. This system is involved in arbutin, cellobiose, and salicin transport. The protein is PTS system arbutin-, cellobiose-, and salicin-specific EIIBC component (ascF) of Escherichia coli (strain K12).